An 877-amino-acid chain; its full sequence is Alanine--tRNA ligase (877 aa).

Positions 567, 571, 669, and 673 each coordinate Zn(2+).

It belongs to the class-II aminoacyl-tRNA synthetase family. Zn(2+) serves as cofactor.

Its subcellular location is the cytoplasm. It catalyses the reaction tRNA(Ala) + L-alanine + ATP = L-alanyl-tRNA(Ala) + AMP + diphosphate. In terms of biological role, catalyzes the attachment of alanine to tRNA(Ala) in a two-step reaction: alanine is first activated by ATP to form Ala-AMP and then transferred to the acceptor end of tRNA(Ala). Also edits incorrectly charged Ser-tRNA(Ala) and Gly-tRNA(Ala) via its editing domain. The polypeptide is Alanine--tRNA ligase (Lactobacillus delbrueckii subsp. bulgaricus (strain ATCC 11842 / DSM 20081 / BCRC 10696 / JCM 1002 / NBRC 13953 / NCIMB 11778 / NCTC 12712 / WDCM 00102 / Lb 14)).